Reading from the N-terminus, the 164-residue chain is UPF0114 protein Avin_40830 (164 aa).

A run of 4 helical transmembrane segments spans residues 15–35 (LLAP…LKFF), 53–73 (LILV…LVMV), 103–125 (GSLK…LRVF), and 136–156 (LLWY…MSYL).

This sequence belongs to the UPF0114 family.

The protein resides in the cell membrane. The polypeptide is UPF0114 protein Avin_40830 (Azotobacter vinelandii (strain DJ / ATCC BAA-1303)).